We begin with the raw amino-acid sequence, 391 residues long: Adaptive-response sensory kinase SasA (391 aa).

Residues 169 to 391 (MLAHDLRSPL…CFHFTLPVCR (223 aa)) enclose the Histidine kinase domain. The residue at position 172 (H172) is a Phosphohistidine; by autocatalysis.

In terms of assembly, homooligomerizes. Interacts with KaiC. Participates in the KaiABC clock complex, whose core is composed of a KaiC homohexamer, 6 KaiB and up to 6 KaiA dimers. SasA and KaiB(fs) compete to bind to KaiC.

It carries out the reaction ATP + protein L-histidine = ADP + protein N-phospho-L-histidine.. Its function is as follows. Member of the two-component regulatory system SasA/RpaA involved in genome-wide circadian gene expression. One of several clock output pathways. Participates in the Kai clock protein complex, the main circadian regulator in cyanobacteria, via its interaction with KaiC. KaiC enhances the autophosphorylation activity of SasA, which then transfers its phosphate group to RpaA to activate it. In addition to its output function, recruits fold-shifted KaiB (KaiB(fs)) to KaiC to cooperatively form the KaiB(6):KaiC(6) complex (independent of SasA kinase activity). Required for robustness of the circadian rhythm of gene expression and is involved in clock output, also required for adaptation to light/dark cycles. The polypeptide is Adaptive-response sensory kinase SasA (Rippkaea orientalis (strain PCC 8801 / RF-1) (Cyanothece sp. (strain PCC 8801))).